The sequence spans 90 residues: Probable oxaloacetate decarboxylase gamma chain 2 (90 aa).

A helical membrane pass occupies residues 10-32 (GINLLTLGMGFVFIFLIFLVYAT).

The protein belongs to the OadG family. Heterotrimer of an alpha, a beta and a gamma subunit. It depends on Na(+) as a cofactor.

The protein localises to the cell membrane. It catalyses the reaction oxaloacetate + 2 Na(+)(in) + H(+) = pyruvate + 2 Na(+)(out) + CO2. Catalyzes the decarboxylation of oxaloacetate coupled to Na(+) translocation. The chain is Probable oxaloacetate decarboxylase gamma chain 2 (oadG2) from Vibrio cholerae serotype O1 (strain ATCC 39315 / El Tor Inaba N16961).